We begin with the raw amino-acid sequence, 642 residues long: Threonine--tRNA ligase (642 aa).

The region spanning 1–61 (MPVITLPDGS…DTDAQLAIIT (61 aa)) is the TGS domain. A catalytic region spans residues 243-534 (DHRKIGKQLD…LTEEFAGFFP (292 aa)). Cys-334, His-385, and His-511 together coordinate Zn(2+).

Belongs to the class-II aminoacyl-tRNA synthetase family. Homodimer. Zn(2+) serves as cofactor.

The protein resides in the cytoplasm. It catalyses the reaction tRNA(Thr) + L-threonine + ATP = L-threonyl-tRNA(Thr) + AMP + diphosphate + H(+). Its function is as follows. Catalyzes the attachment of threonine to tRNA(Thr) in a two-step reaction: L-threonine is first activated by ATP to form Thr-AMP and then transferred to the acceptor end of tRNA(Thr). Also edits incorrectly charged L-seryl-tRNA(Thr). In Pectobacterium atrosepticum (strain SCRI 1043 / ATCC BAA-672) (Erwinia carotovora subsp. atroseptica), this protein is Threonine--tRNA ligase.